A 179-amino-acid chain; its full sequence is ATP synthase subunit delta (179 aa).

Belongs to the ATPase delta chain family. In terms of assembly, F-type ATPases have 2 components, F(1) - the catalytic core - and F(0) - the membrane proton channel. F(1) has five subunits: alpha(3), beta(3), gamma(1), delta(1), epsilon(1). F(0) has three main subunits: a(1), b(2) and c(10-14). The alpha and beta chains form an alternating ring which encloses part of the gamma chain. F(1) is attached to F(0) by a central stalk formed by the gamma and epsilon chains, while a peripheral stalk is formed by the delta and b chains.

Its subcellular location is the cell inner membrane. Its function is as follows. F(1)F(0) ATP synthase produces ATP from ADP in the presence of a proton or sodium gradient. F-type ATPases consist of two structural domains, F(1) containing the extramembraneous catalytic core and F(0) containing the membrane proton channel, linked together by a central stalk and a peripheral stalk. During catalysis, ATP synthesis in the catalytic domain of F(1) is coupled via a rotary mechanism of the central stalk subunits to proton translocation. Functionally, this protein is part of the stalk that links CF(0) to CF(1). It either transmits conformational changes from CF(0) to CF(1) or is implicated in proton conduction. The sequence is that of ATP synthase subunit delta from Anaeromyxobacter dehalogenans (strain 2CP-1 / ATCC BAA-258).